We begin with the raw amino-acid sequence, 178 residues long: MSRIGKQPVKLASGLEAKLEGNKLIIKKGQDEKVIDTKGVVKVNINGDELTFEPVEETKFAKAMWGTVRALANNAVIGLTQGFEKKLEINGVGYRAQVKGNILELQLGYSHPINFEIPKGITITVEKNIITVKGSDKQQVGQVASEIRSFRKPEPYKGKGVKYVDEHIIRKAGKTAKK.

Belongs to the universal ribosomal protein uL6 family. As to quaternary structure, part of the 50S ribosomal subunit.

In terms of biological role, this protein binds to the 23S rRNA, and is important in its secondary structure. It is located near the subunit interface in the base of the L7/L12 stalk, and near the tRNA binding site of the peptidyltransferase center. The polypeptide is Large ribosomal subunit protein uL6 (Nautilia profundicola (strain ATCC BAA-1463 / DSM 18972 / AmH)).